The chain runs to 471 residues: Protoporphyrinogen oxidase (471 aa).

FAD contacts are provided by residues 16-21, 39-40, A47, 61-64, V251, W408, and 446-448; these read GGGISG, ES, GPNS, and VGL.

Belongs to the protoporphyrinogen/coproporphyrinogen oxidase family. Protoporphyrinogen oxidase subfamily. Monomer. Homodimer. FAD serves as cofactor.

It is found in the cytoplasm. Its subcellular location is the cell membrane. The catalysed reaction is protoporphyrinogen IX + 3 O2 = protoporphyrin IX + 3 H2O2. It participates in porphyrin-containing compound metabolism; protoporphyrin-IX biosynthesis; protoporphyrin-IX from protoporphyrinogen-IX: step 1/1. Strongly inhibited by acifluorfen. Its function is as follows. Catalyzes the 6-electron oxidation of protoporphyrinogen-IX to form protoporphyrin-IX. Does not oxidize coproporphyrinogen III. Involved in the classical protoporphyrin-dependent (PPD) heme b biosynthesis. This is Protoporphyrinogen oxidase from Myxococcus xanthus.